We begin with the raw amino-acid sequence, 514 residues long: Ribonuclease Y (514 aa).

Residues Tyr-3–Phe-23 form a helical membrane-spanning segment. A KH domain is found at Thr-204–Leu-289. The HD domain occupies Val-330–Ala-423.

It belongs to the RNase Y family.

It is found in the cell membrane. Its function is as follows. Endoribonuclease that initiates mRNA decay. This Clostridium kluyveri (strain ATCC 8527 / DSM 555 / NBRC 12016 / NCIMB 10680 / K1) protein is Ribonuclease Y.